A 428-amino-acid polypeptide reads, in one-letter code: Glycine reductase complex component B subunits alpha and beta (428 aa).

C242 acts as the Schiff-base intermediate with substrate; via pyruvic acid in catalysis. The residue at position 242 (C242) is a Pyruvic acid (Cys).

Heterohexamer of two alpha, two beta and two gamma subunits. Component of the glycine reductase complex, together with components A and C. PB is substrate specific. Post-translationally, the peptide chain is cleaved into beta and alpha chains, and the alpha chain N-terminal cysteine is deaminated and oxidized to form a reactive pyruvoyl group.

It carries out the reaction acetyl phosphate + [thioredoxin]-disulfide + NH4(+) + H2O = [thioredoxin]-dithiol + glycine + phosphate + H(+). In the first step of glycine reductase, the substrate is bound to component PB via a Schiff base intermediate. Then the PB-activated substrate is nucleophilically attacked by the selenol anion of component PA to transform it to a carboxymethylated selenoether and the respective amine. By action of component PC, acetyl phosphate is formed, leaving component PA in its oxidized state. Finally component PA becomes reduced by the thioredoxin system to start a new catalytic cycle of reductive deamination. The protein is Glycine reductase complex component B subunits alpha and beta (grdE) of Peptoclostridium acidaminophilum (Eubacterium acidaminophilum).